The chain runs to 58 residues: Cholecystokinins (58 aa).

Tyr52 bears the Sulfotyrosine mark. Phe58 is subject to Phenylalanine amide.

Belongs to the gastrin/cholecystokinin family. In terms of assembly, binds to CCK-A receptors in the pancreas and CCK-B receptors in the brain. cholecystokinin 8 binds CCK-A receptors more potently than cholecystokinin 58, cholecystokinin 8 and cholecystokinin 58 bind CCK-B receptors with equal affinity. In terms of processing, the precursor is cleaved by proteases to produce a number of active cholecystokinins. Post-translationally, cholecystokinin 58 occurs in both sulfated (CCK58(s)) and nonsulfated (CCK58(ns)) forms, which differ in their receptor-binding activities. CCK58(s) binds to the CCK-A receptor with high affinity, CCK58(ns) binds poorly to the CCK-A receptor. CCK58(s) and CCK58(ns) both bind the CCK-B receptor. The precursor is cleaved by ACE, which removes the Gly-Arg-Arg peptide at the C-terminus, leading to mature hormone.

It is found in the secreted. Its function is as follows. This peptide hormone induces gall bladder contraction and the release of pancreatic enzymes in the gut. Its function in the brain is not clear. Binding to CCK-A receptors stimulates amylase release from the pancreas, binding to CCK-B receptors stimulates gastric acid secretion. cholecystokinin 58 and cholecystokinin 8, but not cholecystokinin 58 desnonopeptide, stimulate amylase release from the pancreas. cholecystokinin 58, but not cholecystokinin 8, increases bile-pancreatic volume. In Canis lupus familiaris (Dog), this protein is Cholecystokinins.